Consider the following 75-residue polypeptide: Small ribosomal subunit protein bS18 (75 aa).

The protein belongs to the bacterial ribosomal protein bS18 family. As to quaternary structure, part of the 30S ribosomal subunit. Forms a tight heterodimer with protein bS6.

In terms of biological role, binds as a heterodimer with protein bS6 to the central domain of the 16S rRNA, where it helps stabilize the platform of the 30S subunit. This Roseobacter denitrificans (strain ATCC 33942 / OCh 114) (Erythrobacter sp. (strain OCh 114)) protein is Small ribosomal subunit protein bS18.